Reading from the N-terminus, the 125-residue chain is Small ribosomal subunit protein uS12m (125 aa).

It belongs to the universal ribosomal protein uS12 family. In terms of assembly, component of the mitochondrial ribosome small subunit.

The protein resides in the mitochondrion. In terms of biological role, protein S12 is involved in the translation initiation step. This chain is Small ribosomal subunit protein uS12m (RPS12), found in Arabidopsis thaliana (Mouse-ear cress).